Reading from the N-terminus, the 167-residue chain is Peptide deformylase (167 aa).

Fe cation-binding residues include Cys-91 and His-133. Residue Glu-134 is part of the active site. A Fe cation-binding site is contributed by His-137.

Belongs to the polypeptide deformylase family. Fe(2+) is required as a cofactor.

It catalyses the reaction N-terminal N-formyl-L-methionyl-[peptide] + H2O = N-terminal L-methionyl-[peptide] + formate. Removes the formyl group from the N-terminal Met of newly synthesized proteins. Requires at least a dipeptide for an efficient rate of reaction. N-terminal L-methionine is a prerequisite for activity but the enzyme has broad specificity at other positions. In Neisseria meningitidis serogroup C (strain 053442), this protein is Peptide deformylase.